A 248-amino-acid chain; its full sequence is uncharacterized protein (248 aa).

8-32 (EVALVTGASSGIGKAIALELASAGL) is a binding site for NADP(+). Substrate is bound at residue serine 134. Tyrosine 147 serves as the catalytic Proton acceptor.

Belongs to the short-chain dehydrogenases/reductases (SDR) family.

This is an uncharacterized protein from Sinorhizobium fredii (strain NBRC 101917 / NGR234).